The sequence spans 121 residues: Protein AC4 (121 aa).

Residues 11-30 form a disordered region; it reads RGQSSNPHTSESQERNIQTG. Positions 12 to 30 are enriched in polar residues; sequence GQSSNPHTSESQERNIQTG.

The protein belongs to the geminiviridae protein AC4/C4 family.

Functionally, pathogenicity determinant. May act as a suppressor of RNA-mediated gene silencing, also known as post-transcriptional gene silencing (PTGS), a mechanism of plant viral defense that limits the accumulation of viral RNAs. In Cabbage leaf curl virus (isolate Jamaica) (CaLCuV), this protein is Protein AC4.